The sequence spans 419 residues: Heparan-sulfate 6-O-sulfotransferase 3-B (419 aa).

Topologically, residues 1-7 (MNDKPNK) are cytoplasmic. Residues 8–28 (WIFIPILAILFVMIGYQYVCP) traverse the membrane as a helical; Signal-anchor for type II membrane protein segment. The Lumenal portion of the chain corresponds to 29 to 419 (AGGQACHFRT…EDYASQVVRW (391 aa)). The N-linked (GlcNAc...) asparagine glycan is linked to Asn-77. 101–109 (HIQKTGGTT) lines the 3'-phosphoadenylyl sulfate pocket. Residues 131 to 132 (KK), Arg-148, Trp-153, and His-158 contribute to the substrate site. Catalysis depends on His-158, which acts as the Proton acceptor. 3'-phosphoadenylyl sulfate contacts are provided by Arg-191 and Ser-199. The substrate site is built by His-203 and Trp-210. 2 N-linked (GlcNAc...) asparagine glycosylation sites follow: Asn-270 and Asn-275. 323 to 325 (TQI) lines the 3'-phosphoadenylyl sulfate pocket. Asn-326 carries N-linked (GlcNAc...) asparagine glycosylation. 329 to 330 (RA) is a binding site for 3'-phosphoadenylyl sulfate. 2 N-linked (GlcNAc...) asparagine glycosylation sites follow: Asn-393 and Asn-402.

This sequence belongs to the sulfotransferase 6 family. As to expression, in early somitogenesis, expressed in presumptive forebrain and midbrain, tail bud and Kupffer's vesicle. During mid-somitogenesis, ubiquitous expression which is strongest in the somites and eye. During late somitogenesis, predominantly expressed in eye, hindbrain and ventral somites. At 24 hours post-fertilization (hpf), restricted to lens and neural retina, brain, otic vesicle and somites. At 36 hpf, brain expression is restricted to telencephalon. At 48 hpf, restricted to telencephalon and pectoral fin.

It localises to the membrane. The enzyme catalyses alpha-D-glucosaminyl-[heparan sulfate](n) + 3'-phosphoadenylyl sulfate = 6-sulfo-alpha-D-glucosaminyl-[heparan sulfate](n) + adenosine 3',5'-bisphosphate + H(+). Its function is as follows. 6-O-sulfation enzyme which catalyzes the transfer of sulfate from 3'-phosphoadenosine 5'-phosphosulfate (PAPS) to position 6 of the N-sulfoglucosamine residue (GlcNS) of heparan sulfate. The chain is Heparan-sulfate 6-O-sulfotransferase 3-B from Danio rerio (Zebrafish).